Here is a 937-residue protein sequence, read N- to C-terminus: MTDSKYFTTNKKGEIFELKAELNNEKKEKRKEAVKKVIAAMTVGKDVSSLFPDVVNCMQTDNLELKKLVYLYLMNYAKSQPDMAIMAVNSFVKDCEDPNPLIRALAVRTMGCIRVDKITEYLCEPLRKCLKDEDPYVRKTAAVCVAKLHDINAQMVEDQGFLDSLRDLIADSNPMVVANAVAALSEISESHPNSNLLDLNPQNINKLLTALNECTEWGQIFILDCLSNYNPKDDREAQSICERVTPRLSHANSAVVLSAVKVLMKFLELLPKDSDYYNMLLKKLAPPLVTLLSGEPEVQYVALRNINLIVQKRPEILKQEIKVFFVKYNDPIYVKLEKLDIMIRLASQANIAQVLAELKEYATEVDVDFVRKAVRAIGRCAIKVEQSAERCVSTLLDLIQTKVNYVVQEAIVVIRDIFRKYPNKYESIIATLCENLDSLDEPDARAAMIWIVGEYAERIDNADELLESFLEGFHDESTQVQLTLLTAIVKLFLKKPSETQELVQQVLSLATQDSDNPDLRDRGYIYWRLLSTDPVTAKEVVLSEKPLISEETDLIEPTLLDELICHIGSLASVYHKPPNAFVEGSHGIHRKHLPIHHGSTDAGDSPVGTTTATNLEQPQVIPSQGDLLGDLLNLDLGPPVNVPQVSSMQMGAVDLLGGGLDSLVGQSFIPSSVPATFAPSPTPAVVSSGLNDLFELSTGIGMAPGGYVAPKAVWLPAVKAKGLEISGTFTHRQGHIYMEMNFTNKALQHMTDFAIQFNKNSFGVIPSTPLAIHTPLMPNQSIDVSLPLNTLGPVMKMEPLNNLQVAVKNNIDVFYFSCLIPLNVLFVEDGKMERQVFLATWKDIPNENELQFQIKECHLNADTVSSKLQNNNVYTIAKRNVEGQDMLYQSLKLTNGIWILAELRIQPGNPNYTLSLKCRAPEVSQYIYQVYDSILKN.

At Thr2 the chain carries N-acetylthreonine. Ser4 is subject to Phosphoserine. Residue Lys265 is modified to N6-acetyllysine. Tyr737 bears the Phosphotyrosine; by SRC mark. The interval 841–937 (WKDIPNENEL…YQVYDSILKN (97 aa)) is interaction with ARRB1. Position 928 is a phosphotyrosine (Tyr928).

Belongs to the adaptor complexes large subunit family. In terms of assembly, adaptor protein complex 2 (AP-2) is a heterotetramer composed of two large adaptins (alpha-type subunit AP2A1 or AP2A2 and beta-type subunit AP2B1), a medium adaptin (mu-type subunit AP2M1) and a small adaptin (sigma-type subunit AP2S1). Interacts with EPN1. Interacts with EPS15; clathrin competes with EPS15. Interacts with SNAP91; clathrin competes with SNAP91. Interacts with CLTC; clathrin competes with EPS15, SNAP91 and PIP5K1C. Interacts with LDLRAP1. Interacts with AMPH and BIN1. Interacts with ARF6 (GDP-bound). Interacts (dephosphorylated at Tyr-737) with ARRB1; phosphorylation of AP2B1 at Tyr-737 disrupts the interaction. Interacts with SLC2A8. Interacts with SCYL1 and SCYL2. Interacts with TGFBR1 and TGFBR2. Interacts with PIP5K1C; clathrin competes with PIP5K1C. Interacts with DENND1B, but not with DENND1A, nor DENND1C. Interacts with FCHO1. Interacts with RFTN1. Interacts with KIAA1107. Together with AP2A1 or AP2A2 and AP2M1, it interacts with ADAM10; this interaction facilitates ADAM10 endocytosis from the plasma membrane during long-term potentiation in hippocampal neurons. Post-translationally, phosphorylation at Tyr-737 by SRC occurs at the plasma membrane in clathrin-coated vesicles (CCVs). As to expression, expressed in the brain (at protein level).

It localises to the cell membrane. It is found in the membrane. The protein localises to the coated pit. Component of the adaptor protein complex 2 (AP-2). Adaptor protein complexes function in protein transport via transport vesicles in different membrane traffic pathways. Adaptor protein complexes are vesicle coat components and appear to be involved in cargo selection and vesicle formation. AP-2 is involved in clathrin-dependent endocytosis in which cargo proteins are incorporated into vesicles surrounded by clathrin (clathrin-coated vesicles, CCVs) which are destined for fusion with the early endosome. The clathrin lattice serves as a mechanical scaffold but is itself unable to bind directly to membrane components. Clathrin-associated adaptor protein (AP) complexes which can bind directly to both the clathrin lattice and to the lipid and protein components of membranes are considered to be the major clathrin adaptors contributing the CCV formation. AP-2 also serves as a cargo receptor to selectively sort the membrane proteins involved in receptor-mediated endocytosis. AP-2 seems to play a role in the recycling of synaptic vesicle membranes from the presynaptic surface. AP-2 recognizes Y-X-X-[FILMV] (Y-X-X-Phi) and [ED]-X-X-X-L-[LI] endocytosis signal motifs within the cytosolic tails of transmembrane cargo molecules. AP-2 may also play a role in maintaining normal post-endocytic trafficking through the ARF6-regulated, non-clathrin pathway. During long-term potentiation in hippocampal neurons, AP-2 is responsible for the endocytosis of ADAM10. The AP-2 beta subunit acts via its C-terminal appendage domain as a scaffolding platform for endocytic accessory proteins; at least some clathrin-associated sorting proteins (CLASPs) are recognized by their [DE]-X(1,2)-F-X-X-[FL]-X-X-X-R motif. The AP-2 beta subunit binds to clathrin heavy chain, promoting clathrin lattice assembly; clathrin displaces at least some CLASPs from AP2B1 which probably then can be positioned for further coat assembly. In Homo sapiens (Human), this protein is AP-2 complex subunit beta (AP2B1).